A 93-amino-acid chain; its full sequence is Large ribosomal subunit protein uL23 (93 aa).

Belongs to the universal ribosomal protein uL23 family. As to quaternary structure, part of the 50S ribosomal subunit. Contacts protein L29, and trigger factor when it is bound to the ribosome.

Its function is as follows. One of the early assembly proteins it binds 23S rRNA. One of the proteins that surrounds the polypeptide exit tunnel on the outside of the ribosome. Forms the main docking site for trigger factor binding to the ribosome. The chain is Large ribosomal subunit protein uL23 from Campylobacter lari (strain RM2100 / D67 / ATCC BAA-1060).